The primary structure comprises 602 residues: Isocyanide synthase A (602 aa).

This sequence belongs to the isocyanide synthase family.

Isocyanide synthase involved in the biosynthesis of isocyanides (or isonitriles), a class of microbial secondary metabolites. The presence of an isonitrile moiety within a compound imparts unique biological (cytotoxic, antibacterial, and antiprotozoal) and chemical (transition metal coordination) properties and enables synthetic and biochemical applications. This Aspergillus fumigatus (strain ATCC MYA-4609 / CBS 101355 / FGSC A1100 / Af293) (Neosartorya fumigata) protein is Isocyanide synthase A.